We begin with the raw amino-acid sequence, 260 residues long: Carbonic anhydrase 2 (260 aa).

Ser-2 is subject to N-acetylserine. A Phosphoserine modification is found at Ser-2. Residues 3–259 (HHWGYGEHNG…LKNRQVRVFP (257 aa)) form the Alpha-carbonic anhydrase domain. His-64 functions as the Proton donor/acceptor in the catalytic mechanism. Residues His-94, His-96, and His-119 each contribute to the Zn(2+) site. Phosphoserine occurs at positions 165 and 172. 198-199 (TN) lines the substrate pocket.

This sequence belongs to the alpha-carbonic anhydrase family. Interacts with SLC4A4 and SLC26A6. Interaction with SLC4A7 regulates SLC4A7 transporter activity. It depends on Zn(2+) as a cofactor.

The protein resides in the cytoplasm. The protein localises to the cell membrane. It catalyses the reaction hydrogencarbonate + H(+) = CO2 + H2O. The enzyme catalyses urea = cyanamide + H2O. With respect to regulation, inhibited by acetazolamide. Functionally, catalyzes the reversible hydration of carbon dioxide. Can also hydrate cyanamide to urea. Involved in the regulation of fluid secretion into the anterior chamber of the eye. Essential for bone resorption and osteoclast differentiation. Contributes to intracellular pH regulation in the duodenal upper villous epithelium during proton-coupled peptide absorption. Stimulates the chloride-bicarbonate exchange activity of SLC26A6. In Ovis aries (Sheep), this protein is Carbonic anhydrase 2 (CA2).